Reading from the N-terminus, the 82-residue chain is Small ribosomal subunit protein uS17c (82 aa).

This sequence belongs to the universal ribosomal protein uS17 family. Part of the 30S ribosomal subunit.

The protein resides in the plastid. It localises to the chloroplast. Its function is as follows. One of the primary rRNA binding proteins, it binds specifically to the 5'-end of 16S ribosomal RNA. This is Small ribosomal subunit protein uS17c (rps17) from Cyanidioschyzon merolae (strain NIES-3377 / 10D) (Unicellular red alga).